The chain runs to 310 residues: Nucleotide-binding protein Ddes_0972 (310 aa).

Residue 30–37 (GLSGAGKS) coordinates ATP. 82–85 (DLRQ) contributes to the GTP binding site.

It belongs to the RapZ-like family.

Functionally, displays ATPase and GTPase activities. This chain is Nucleotide-binding protein Ddes_0972, found in Desulfovibrio desulfuricans (strain ATCC 27774 / DSM 6949 / MB).